The primary structure comprises 444 residues: Cytokine receptor-like factor 3 (444 aa).

Residues 1–65 (MSIEAEALLQ…QELQTAVSRL (65 aa)) are a coiled coil. Residues 177 to 270 (PPVQIEELVE…PQTGYTTLAP (94 aa)) form the Fibronectin type-III domain.

Belongs to the cytokine receptor-like factor 3 family.

It localises to the cytoplasm. Functionally, may play a role in the negative regulation of cell cycle progression. This is Cytokine receptor-like factor 3 (crlf3) from Danio rerio (Zebrafish).